The chain runs to 67 residues: Putative sodium channel alpha-toxin Acra7 (67 aa).

One can recognise an LCN-type CS-alpha/beta domain in the interval 2–66 (RDGYIVKPTN…PIKDPNQDCT (65 aa)). Intrachain disulfides connect cysteine 12/cysteine 65, cysteine 16/cysteine 37, cysteine 23/cysteine 47, and cysteine 27/cysteine 49. Arginine 67 is a propeptide (removed by a carboxypeptidase).

It belongs to the long (4 C-C) scorpion toxin superfamily. Sodium channel inhibitor family. Alpha subfamily. In terms of tissue distribution, expressed by the venom gland.

The protein localises to the secreted. In terms of biological role, alpha toxins bind voltage-independently at site-3 of sodium channels (Nav) and inhibit the inactivation of the activated channels, thereby blocking neuronal transmission. In Androctonus crassicauda (Arabian fat-tailed scorpion), this protein is Putative sodium channel alpha-toxin Acra7.